We begin with the raw amino-acid sequence, 817 residues long: E3 ubiquitin-protein ligase TRIM9 (817 aa).

The segment at 10-50 (CPVCGSFYREPIILPCSHNLCQACARNILVQTPESESPQSR) adopts an RING-type zinc-finger fold. Threonine 41 is modified (phosphothreonine). Residues serine 44, serine 46, serine 49, and serine 53 each carry the phosphoserine modification. 2 consecutive B box-type zinc fingers follow at residues 163–212 (AAAL…LVPP) and 224–266 (RKVS…VKAL). Zn(2+) contacts are provided by cysteine 168, cysteine 171, cysteine 193, histidine 198, cysteine 229, histidine 232, cysteine 252, and histidine 258. Residues 273–340 (HKSQLSQALN…KAQLLARVNK (68 aa)) adopt a coiled-coil conformation. Positions 374–432 (IKENDPSGFLQISDALIRRVHLTEDQWGKGTLTPRMTTDFDLSLDNSPLLQSIHQLDFV) constitute a COS domain. Positions 440–535 (VPATPILQLE…KTLVLQTSEA (96 aa)) constitute a Fibronectin type-III domain. The interval 535-557 (AAGAHETKPMKDTDSEEQTLPFP) is disordered. The segment covering 537-547 (GAHETKPMKDT) has biased composition (basic and acidic residues). Residues 613-794 (ETQSASYSQL…VQVSLWAPGL (182 aa)) enclose the B30.2/SPRY domain.

It belongs to the TRIM/RBCC family. As to quaternary structure, interacts with SNAP25. Auto-ubiquitinated. Brain. Expression is higher in the cerebral cortex and hippocampus (at protein level). Its expression is mainly confined to the central nervous system. The developing neocortex, the dorsal thalamus, the midbrain, the basal area of the hindbrain and spinal cord show high level of expression during embryogenesis. In adult brain, it is detected in the Purkinje cells of the cerebellum, in the hippocampus, and in the cortex.

It is found in the cytoplasm. Its subcellular location is the cell projection. The protein localises to the dendrite. The protein resides in the cytoplasmic vesicle. It localises to the secretory vesicle. It is found in the synaptic vesicle. Its subcellular location is the synapse. The protein localises to the cytoskeleton. It catalyses the reaction S-ubiquitinyl-[E2 ubiquitin-conjugating enzyme]-L-cysteine + [acceptor protein]-L-lysine = [E2 ubiquitin-conjugating enzyme]-L-cysteine + N(6)-ubiquitinyl-[acceptor protein]-L-lysine.. Its pathway is protein modification; protein ubiquitination. E3 ubiquitin-protein ligase which ubiquitinates itself in cooperation with an E2 enzyme UBE2D2/UBC4 and serves as a targeting signal for proteasomal degradation. May play a role in regulation of neuronal functions. May act as a regulator of synaptic vesicle exocytosis by controlling the availability of SNAP25 for the SNARE complex formation. The chain is E3 ubiquitin-protein ligase TRIM9 (Trim9) from Mus musculus (Mouse).